Here is a 322-residue protein sequence, read N- to C-terminus: Fructose-1,6-bisphosphatase class 1 3 (322 aa).

Mg(2+) is bound by residues Glu-84, Asp-103, Leu-105, and Asp-106. Residues Asp-106–Ser-109, Asn-198, and Lys-262 each bind substrate. Glu-268 contacts Mg(2+).

The protein belongs to the FBPase class 1 family. As to quaternary structure, homotetramer. Mg(2+) is required as a cofactor.

The protein resides in the cytoplasm. The catalysed reaction is beta-D-fructose 1,6-bisphosphate + H2O = beta-D-fructose 6-phosphate + phosphate. It functions in the pathway carbohydrate biosynthesis; gluconeogenesis. In Pseudoalteromonas translucida (strain TAC 125), this protein is Fructose-1,6-bisphosphatase class 1 3.